Reading from the N-terminus, the 764-residue chain is Cyclin-F (764 aa).

Residues 19–27 carry the Nuclear localization signal 1 motif; the sequence is RKRVRKRAS. In terms of domain architecture, F-box spans 28–75; sequence AVSLLSLPEELLVFVLQCLSAEDLLSVRAVHSHLCDIIDTNASIWARV. In terms of domain architecture, Cyclin N-terminal spans 307-404; the sequence is TKRYILVDWL…EVISVLDGKI (98 aa). The D box 1 motif lies at 309-312; sequence RYIL. Positions 570-575 match the Nuclear localization signal 2 motif; that stretch reads SSKRRR. Residues 583-738 are PEST; sequence RGAFVATPTA…PSQRIRRQVK (156 aa). The segment at 662-754 is disordered; it reads CEEDEQEPPT…HSAGEAEQED (93 aa). A compositionally biased stretch (low complexity) spans 682–692; the sequence is SSSSTSSSSSS. Residues 702 to 722 show a composition bias toward polar residues; it reads SGYSSIQSFPSPTGSSALVSP. A compositionally biased stretch (basic residues) spans 732–742; it reads RIRRQVKRKNT.

This sequence belongs to the cyclin family. Cyclin AB subfamily. Component of the SCF(CCNF) complex. As to expression, expressed in the brain.

It is found in the nucleus. Its subcellular location is the cytoplasm. It localises to the perinuclear region. The protein resides in the cytoskeleton. The protein localises to the microtubule organizing center. It is found in the centrosome. Its subcellular location is the centriole. Functionally, substrate recognition component of a SCF (SKP1-CUL1-F-box protein) E3 ubiquitin-protein ligase complex which mediates the ubiquitination and subsequent proteasomal degradation of target proteins. The SCF(CCNF) E3 ubiquitin-protein ligase complex is an integral component of the ubiquitin proteasome system (UPS) and links proteasome degradation to the cell cycle. Mediates the substrate recognition and the proteasomal degradation of various target proteins during G2 phase involved in the regulation of cell cycle progression and in the maintenance of genome stability. May play a role in motor neuron development and axonal outgrowth. This is Cyclin-F (ccnf) from Danio rerio (Zebrafish).